The chain runs to 445 residues: 3-phosphoshikimate 1-carboxyvinyltransferase (445 aa).

Positions 1 to 24 (MEHAATLPQTSRRPATPLTGTITV) are disordered. Polar residues predominate over residues 7–22 (LPQTSRRPATPLTGTI). 3-phosphoshikimate contacts are provided by lysine 28, serine 29, and arginine 33. Lysine 28 contacts phosphoenolpyruvate. Phosphoenolpyruvate-binding residues include glycine 101 and arginine 129. 3-phosphoshikimate is bound by residues serine 174, glutamine 176, aspartate 326, and lysine 353. Glutamine 176 lines the phosphoenolpyruvate pocket. Aspartate 326 acts as the Proton acceptor in catalysis. Phosphoenolpyruvate is bound by residues arginine 357 and arginine 399.

It belongs to the EPSP synthase family. As to quaternary structure, monomer.

It is found in the cytoplasm. It catalyses the reaction 3-phosphoshikimate + phosphoenolpyruvate = 5-O-(1-carboxyvinyl)-3-phosphoshikimate + phosphate. It functions in the pathway metabolic intermediate biosynthesis; chorismate biosynthesis; chorismate from D-erythrose 4-phosphate and phosphoenolpyruvate: step 6/7. Catalyzes the transfer of the enolpyruvyl moiety of phosphoenolpyruvate (PEP) to the 5-hydroxyl of shikimate-3-phosphate (S3P) to produce enolpyruvyl shikimate-3-phosphate and inorganic phosphate. The polypeptide is 3-phosphoshikimate 1-carboxyvinyltransferase (Acidiphilium cryptum (strain JF-5)).